The sequence spans 353 residues: Protein arginine N-methyltransferase 1 (353 aa).

An SAM-dependent MTase PRMT-type domain is found at 32–353 (KDYYFDSYAH…LSCSTDYRMR (322 aa)). S-adenosyl-L-methionine contacts are provided by His-45, Arg-54, Gly-78, and Glu-100. Lys-116 carries the post-translational modification N6-succinyllysine. Residue Lys-127 forms a Glycyl lysine isopeptide (Lys-Gly) (interchain with G-Cter in ubiquitin) linkage. Glu-129 contacts S-adenosyl-L-methionine. Catalysis depends on residues Glu-144 and Glu-153. Lys-210 and Lys-215 each carry N6-acetyllysine. Phosphoserine is present on residues Ser-286 and Ser-289.

The protein belongs to the class I-like SAM-binding methyltransferase superfamily. Protein arginine N-methyltransferase family. Homodimer and heterodimer with PRMT8. Homooctamer; individual homodimers associates to form a homooctamer. Interacts with NFATC2IP. Interacts with ILF3 and SUPT5H. Individual homodimers can associate to form a homohexamer. Interacts with FOXO1; the interaction methylates FOXO1, retaining it in the nucleus and increasing its transcriptional activity. Methylation of FOXO1 is increased with oxidative stress. Interacts with CHTOP; the interaction methylates CHTOP, enabling its interaction with the 5FMC complex. Interacts with BTG1, BTG2 and IFNAR1. Interacts with and probably methylates ATXN2L. Component of the methylosome, a 20S complex containing at least CLNS1A/pICln, PRMT5/SKB1, WDR77/MEP50, PRMT1 and ERH. Interacts with DHX9 (via RGG region). Interacts (via N-terminus) with HABP4. Interacts with MAP3K5/ASK1; the interaction results in MAP3K5 methylation by PRMT1 which inhibits MAP3K5 activation. Interacts with TRIM48; the interaction results in ubiquitination of PRMT1 by TRIM48, leading to PRMT1 proteasomal degradation and activation of MAP3K5. Interacts with GATOR1 complex; this interaction is S-adenosyl-L-methionine (SAM) dependent and is perturbated by SAMTOR in a SAM-sensitive manner. Interacts with GFI1; promoting recognition and binding of MRE11 and TP53BP1 substrates by PRMT1. Post-translationally, polyubiquitinated at Lys-127 by the SCF(FBXL17) complex, leading to its subsequent degradation. Ubiquitination is regulated by acetylation at Lys-210 and Lys-215. Polyubiquitinated by E3 ubiquitin-protein ligase TRIM48, leading to suppression of MAP3K5/ASK1 methylation and subsequent MAP3K5 activation. In terms of processing, acetylation at Lys-210 and Lys-215 regulates ubiquitination by the SCF(FBXL17) complex. Acetylated at Lys-215 by p300/EP300. Deacetylated at Lys-210 and Lys-215 by SIRT1. Ubiquitous.

It localises to the nucleus. It is found in the nucleoplasm. Its subcellular location is the cytoplasm. The protein resides in the cytosol. The protein localises to the lysosome membrane. It carries out the reaction L-arginyl-[protein] + 2 S-adenosyl-L-methionine = N(omega),N(omega)-dimethyl-L-arginyl-[protein] + 2 S-adenosyl-L-homocysteine + 2 H(+). It catalyses the reaction L-arginyl-[protein] + S-adenosyl-L-methionine = N(omega)-methyl-L-arginyl-[protein] + S-adenosyl-L-homocysteine + H(+). The catalysed reaction is N(omega)-methyl-L-arginyl-[protein] + S-adenosyl-L-methionine = N(omega),N(omega)-dimethyl-L-arginyl-[protein] + S-adenosyl-L-homocysteine + H(+). Its function is as follows. Arginine methyltransferase that methylates (mono and asymmetric dimethylation) the guanidino nitrogens of arginyl residues present in proteins such as ESR1, histone H2, H3 and H4, FMR1, ILF3, HNRNPA1, HNRNPD, NFATC2IP, SUPT5H, TAF15, EWS, HABP4, SERBP1, RBM15, FOXO1, CHTOP, MAP3K5/ASK1 and MICU1. Constitutes the main enzyme that mediates monomethylation and asymmetric dimethylation of histone H4 'Arg-3' (H4R3me1 and H4R3me2a, respectively), a specific tag for epigenetic transcriptional activation. May be involved in the regulation of TAF15 transcriptional activity, act as an activator of estrogen receptor (ER)-mediated transactivation, play a key role in neurite outgrowth and act as a negative regulator of megakaryocytic differentiation, by modulating p38 MAPK pathway. Methylates RBM15, promoting ubiquitination and degradation of RBM15. Methylates MRE11 and TP53BP1, promoting the DNA damage response. Methylates FOXO1 and retains it in the nucleus increasing its transcriptional activity. Methylates CHTOP and this methylation is critical for its 5-hydroxymethylcytosine (5hmC)-binding activity. Methylates MAP3K5/ASK1 at 'Arg-85' and 'Arg-87' which promotes association of MAP3K5 with thioredoxin and negatively regulates MAP3K5 association with TRAF2, inhibiting MAP3K5 stimulation and MAP3K5-induced activation of JNK. Methylates H4R3 in genes involved in glioblastomagenesis in a CHTOP- and/or TET1-dependent manner. Plays a role in regulating alternative splicing in the heart. Methylates NPRL2 at 'Arg-78' leading to inhibition of its GTPase activator activity and then the GATOR1 complex and consequently inducing timely mTORC1 activation under methionine-sufficient conditions. This Rattus norvegicus (Rat) protein is Protein arginine N-methyltransferase 1.